We begin with the raw amino-acid sequence, 1553 residues long: DNA topoisomerase 2-alpha (1553 aa).

The disordered stretch occupies residues 1–25 (MELLDSPAPLRPLHDNPRLPKADGA). Residues 12 to 25 (PLHDNPRLPKADGA) are compositionally biased toward basic and acidic residues. Residues asparagine 92, asparagine 121, 149 to 151 (SSN), and 162 to 169 (GRNGYGAK) contribute to the ATP site. An interaction with DNA region spans residues 343–345 (KKK). 377–379 (QTK) is a binding site for ATP. The Toprim domain occupies 456-573 (CTLILTEGDS…SLLRHNFLEE (118 aa)). Residues glutamate 462, aspartate 542, and aspartate 544 each coordinate Mg(2+). In terms of domain architecture, Topo IIA-type catalytic spans 716 to 1163 (IPSLVDGLKP…SPSDLWKEDL (448 aa)). The O-(5'-phospho-DNA)-tyrosine intermediate role is filled by tyrosine 806. Residues 991 to 1000 (KLQTNLTCNS) form an interaction with DNA region. Disordered stretches follow at residues 1095–1114 (QNKE…AATG) and 1186–1553 (TGKP…DDMF). A compositionally biased stretch (acidic residues) spans 1098-1107 (EEEEGDESGE). Positions 1242–1262 (SEKNESDEKQEGNSSGDKEPS) are enriched in basic and acidic residues. 2 stretches are compositionally biased toward acidic residues: residues 1300–1310 (SESDSESDDFE) and 1334–1349 (SDAD…EYQE). The span at 1371–1385 (VPKEKKGKAPKEKPL) shows a compositional bias: basic and acidic residues. A compositionally biased stretch (low complexity) spans 1413–1432 (PRAQAVPKKPAAAKKGSTAK). Basic residues predominate over residues 1444–1454 (KKKAAPKAPRR). Low complexity predominate over residues 1517-1532 (SIDLTADSPAAAAPRT).

It belongs to the type II topoisomerase family. As to quaternary structure, homodimer. It depends on Mg(2+) as a cofactor. Requires Mn(2+) as cofactor. The cofactor is Ca(2+).

The protein resides in the cytoplasm. Its subcellular location is the nucleus. It is found in the nucleoplasm. It localises to the nucleolus. It carries out the reaction ATP-dependent breakage, passage and rejoining of double-stranded DNA.. Key decatenating enzyme that alters DNA topology by binding to two double-stranded DNA molecules, generating a double-stranded break in one of the strands, passing the intact strand through the broken strand, and religating the broken strand. May play a role in the regulation of circadian rhythm. The sequence is that of DNA topoisomerase 2-alpha (TOP2A) from Gallus gallus (Chicken).